Consider the following 160-residue polypeptide: Calcium and integrin-binding family member 3 (160 aa).

3 consecutive EF-hand domains span residues 39-74 (KDNP…MSEM), 76-111 (PRDL…LTRG), and 117-152 (EVTL…APDF). 10 residues coordinate Ca(2+): Asp-89, Asn-91, Asp-93, Tyr-95, Asp-100, Asp-130, Asp-132, Asp-134, Arg-136, and Asp-141.

In terms of assembly, monomer and homodimer. Interacts with ITGA2B (via C-terminus cytoplasmic tail region); the interaction is stabilized/increased in a calcium and magnesium-dependent manner. Interacts with TMC1. As to expression, expressed in heart, liver and inner ear. In the inner ear, expressed in vestibule and basilar membrane cells. Expressed in megakaryocytes and endothelial cells.

Its function is as follows. Acts as an auxiliary subunit of the sensory mechanoelectrical transduction (MET) channel in hair cells. Plays a role in regulating hair cell MET channel localization and function. This chain is Calcium and integrin-binding family member 3 (Cib3), found in Mus musculus (Mouse).